Reading from the N-terminus, the 104-residue chain is Meiotically up-regulated gene 150 protein (104 aa).

3 helical membrane passes run 30–50, 54–74, and 84–104; these read FFLK…KAWI, TISL…IPYF, and LLWF…SLEI.

The protein resides in the endoplasmic reticulum membrane. In terms of biological role, has a role in meiosis. This is Meiotically up-regulated gene 150 protein (mug150) from Schizosaccharomyces pombe (strain 972 / ATCC 24843) (Fission yeast).